A 198-amino-acid chain; its full sequence is Small ribosomal subunit protein uS4 (198 aa).

The disordered stretch occupies residues 26–45; that stretch reads LKKRPYAPGQHGQRRSKLSN. The 64-residue stretch at 91–154 folds into the S4 RNA-binding domain; the sequence is SRLDNVVYRL…KNLTIVKEAL (64 aa).

The protein belongs to the universal ribosomal protein uS4 family. As to quaternary structure, part of the 30S ribosomal subunit. Contacts protein S5. The interaction surface between S4 and S5 is involved in control of translational fidelity.

Functionally, one of the primary rRNA binding proteins, it binds directly to 16S rRNA where it nucleates assembly of the body of the 30S subunit. With S5 and S12 plays an important role in translational accuracy. The chain is Small ribosomal subunit protein uS4 from Acholeplasma laidlawii (strain PG-8A).